The following is a 424-amino-acid chain: Phosphoribosylamine--glycine ligase (424 aa).

An ATP-grasp domain is found at 111 to 312; sequence KAFVKECGIK…LLDLFLATAK (202 aa). 137–189 contributes to the ATP binding site; sequence IQNASFPLVIKALNKNTSIVHHQEEALKILEDALKQSNEPVIIEPFLEGFELS.

Belongs to the GARS family.

It catalyses the reaction 5-phospho-beta-D-ribosylamine + glycine + ATP = N(1)-(5-phospho-beta-D-ribosyl)glycinamide + ADP + phosphate + H(+). The protein operates within purine metabolism; IMP biosynthesis via de novo pathway; N(1)-(5-phospho-D-ribosyl)glycinamide from 5-phospho-alpha-D-ribose 1-diphosphate: step 2/2. This is Phosphoribosylamine--glycine ligase (purD) from Helicobacter pylori (strain J99 / ATCC 700824) (Campylobacter pylori J99).